The chain runs to 169 residues: Mediator of RNA polymerase II transcription subunit 28 (169 aa).

A disordered region spans residues 1–35; sequence MFSAQQPGPPPPNQPGAPAGLMSTPPGAKNPSSTL. Positions 99-137 form a coiled coil; it reads EQVIKEDVSELRNELQRKEALIQKHLTKLRSWQQVLEEI.

The protein belongs to the Mediator complex subunit 28 family. In terms of assembly, component of the Mediator complex.

It is found in the nucleus. Component of the Mediator complex, a coactivator involved in the regulated transcription of nearly all RNA polymerase II-dependent genes. Mediator functions as a bridge to convey information from gene-specific regulatory proteins to the basal RNA polymerase II transcription machinery. Mediator is recruited to promoters by direct interactions with regulatory proteins and serves as a scaffold for the assembly of a functional preinitiation complex with RNA polymerase II and the general transcription factors. In Xenopus tropicalis (Western clawed frog), this protein is Mediator of RNA polymerase II transcription subunit 28 (med28).